Reading from the N-terminus, the 629-residue chain is Proteoglycan Cow (629 aa).

Positions 1 to 27 are cleaved as a signal peptide; the sequence is MKHSPLIASACLALVLMSSSLIGSTEA. 2 disordered regions span residues 118–186 and 198–223; these read KRRV…ESKE and GDKQQQQQQLSQPAAGPSVIQQDDDE. Over residues 128–143 the composition is skewed to acidic residues; the sequence is DSQDAEDINNDDEDNS. A glycan (N-linked (GlcNAc...) asparagine) is linked at Asn-142. Low complexity predominate over residues 144–159; the sequence is SDGGSSNSSPTGTNNA. Acidic residues predominate over residues 167-186; the sequence is EETDDEDKSLSLGDDDESKE. The region spanning 222 to 273 is the Kazal-like domain; it reads DEELDNCKPCPVAKPTFLCGADNRTYSSLCRLDYHNCIHSTSIRIACKGFCP. 3 disulfide bridges follow: Cys-228–Cys-258, Cys-231–Cys-251, and Cys-240–Cys-272. Asn-244 carries an N-linked (GlcNAc...) asparagine glycan. The interval 298-356 is disordered; it reads SLDQQQQQQQQQQQQQQQQQAYKDSNNNNIMMNSGNIMGGNNNDFNTIMNDKEDNNRHN. A compositionally biased stretch (low complexity) spans 301 to 340; it reads QQQQQQQQQQQQQQQQQAYKDSNNNNIMMNSGNIMGGNNN. 2 EF-hand domains span residues 468-503 and 508-535; these read ACKTEAKWMFGHLDLNNDGQLSLQEMYDLEHDQNER and FIDTCDLDTDSSINTREWCRCFEKTDRP. 5 residues coordinate Ca(2+): Asp-481, Asn-483, Asp-485, Gln-487, and Glu-492. The 62-residue stretch at 533 to 594 folds into the Thyroglobulin type-1 domain; it reads DRPCAAVRRR…NTRTRGKPNC (62 aa). 3 cysteine pairs are disulfide-bonded: Cys-536/Cys-555, Cys-566/Cys-573, and Cys-575/Cys-594. Positions 602 to 629 are disordered; it reads ASLTSDDEDEGADDEDSAEGSADQMLVF. Residues 606–619 are compositionally biased toward acidic residues; that stretch reads SDDEDEGADDEDSA. Low complexity predominate over residues 620–629; that stretch reads EGSADQMLVF.

Interacts (in heparan sulfate-bound form) with wg. Post-translationally, contains heparan sulfate O-linked oligosaccharides. As to expression, in the wing disk, detected throughout the disk where it is localized primarily to the apical surface but is also present at the basal surface (at protein level).

The protein localises to the secreted. Its function is as follows. Binds to the Wnt signaling protein wg, stabilizes it and promotes its extracellular distribution. This is required for establishment of a wg gradient during development to allow for regulation of target genes at different levels. This Drosophila melanogaster (Fruit fly) protein is Proteoglycan Cow.